The following is a 349-amino-acid chain: MKQKYENYFKKRLILNLLIFLLLACSSESIFSQLGNLQKIKHEYNILGSSSPRGISLVGETLYIAAMHLFKKENGKIEKIDLSNSYEFINDIVNISGKTYLLAQNKEEELEVCELNGKDWTLKFKKPLKAYKFLKSVGRDGVKEAYILAIDKNNREKIFDLQGSDKTPPQATENDKFYQISNEENLITGNSLKIWQMNNNTYTNIDYQQAKEIMPIIKTSIRGSSEVLVMTGGYNNLDTKFKVYSNTNNYTTPIFIQDEVGEFSSYFAREFNDAILIGSNNGFAEFTKNKEGIFALRAPSKSVEPGAYNGSQLSKTGLNDIIPVSNNTIYILTQGKGLWKLENRKLTKE.

An N-terminal signal peptide occupies residues 1–29 (MKQKYENYFKKRLILNLLIFLLLACSSES).

This is an uncharacterized protein from Borreliella burgdorferi (strain ATCC 35210 / DSM 4680 / CIP 102532 / B31) (Borrelia burgdorferi).